The sequence spans 85 residues: Large ribosomal subunit protein bL27 (85 aa).

Positions 1–22 are disordered; the sequence is MAHKKAGGSTRNGRDSESKRLG.

Belongs to the bacterial ribosomal protein bL27 family.

In Aliivibrio salmonicida (strain LFI1238) (Vibrio salmonicida (strain LFI1238)), this protein is Large ribosomal subunit protein bL27.